A 257-amino-acid polypeptide reads, in one-letter code: tRNA pseudouridine synthase A (257 aa).

Asp-53 serves as the catalytic Nucleophile. Tyr-111 is a substrate binding site.

This sequence belongs to the tRNA pseudouridine synthase TruA family. As to quaternary structure, homodimer.

The catalysed reaction is uridine(38/39/40) in tRNA = pseudouridine(38/39/40) in tRNA. Formation of pseudouridine at positions 38, 39 and 40 in the anticodon stem and loop of transfer RNAs. The protein is tRNA pseudouridine synthase A of Xanthomonas euvesicatoria pv. vesicatoria (strain 85-10) (Xanthomonas campestris pv. vesicatoria).